The chain runs to 169 residues: Phosphopantetheine adenylyltransferase (169 aa).

Thr-14 serves as a coordination point for substrate. Residues 14 to 15 (TF) and His-22 each bind ATP. 3 residues coordinate substrate: Lys-46, Leu-78, and Arg-92. Residues 93-95 (GLR), Glu-103, and 128-134 (HSFISSS) contribute to the ATP site.

It belongs to the bacterial CoaD family. In terms of assembly, homohexamer. Requires Mg(2+) as cofactor.

The protein resides in the cytoplasm. The enzyme catalyses (R)-4'-phosphopantetheine + ATP + H(+) = 3'-dephospho-CoA + diphosphate. It functions in the pathway cofactor biosynthesis; coenzyme A biosynthesis; CoA from (R)-pantothenate: step 4/5. Reversibly transfers an adenylyl group from ATP to 4'-phosphopantetheine, yielding dephospho-CoA (dPCoA) and pyrophosphate. This is Phosphopantetheine adenylyltransferase from Stenotrophomonas maltophilia (strain K279a).